The chain runs to 988 residues: Exportin-T (988 aa).

The protein belongs to the exportin family. As to expression, expressed in young leaves, growing leaf blades, young floral organs and root tips.

It is found in the nucleus. The protein resides in the cytoplasm. Its function is as follows. Probable tRNA nucleus export receptor which regulates tRNA processing and facilitates tRNA translocation across the nuclear pore complex. Is required for proper activity of the shoot apical meristem (SAM) and correct leaf initiation at different developmental stages, and may play a role in floral patterning. The sequence is that of Exportin-T (PSD) from Arabidopsis thaliana (Mouse-ear cress).